The chain runs to 339 residues: MENNKKENNKKENNLKILEETIKEVEKQFGKGSIFKLNSNNNQSIETISTGSMSLDIALGIGGYPKGRIIEIFGPESSGKTTLTLHAIAEAQKLGGNVAFIDAEHALDPKYAQAIGVNIDELVLSQPDSGEKALDIATSLIKSGSISLLVIDSVAALTPESELMGEMKDINVGLQARMMGKAMRIQSGIISKTNTVVIYINQLREKVGNFYGNPEVTTGGKALKFFCSLRLDIRRTAEKIKNNNDEIIGVKSNIKIVKSKVSTPFKTATVDIIYGKGISKIGEILDLAIDLNLIKRNGAWYNYKNENFAQGKENAKIFLQNNLEIYNFLEEQIRKKYKI.

74–81 serves as a coordination point for ATP; the sequence is GPESSGKT.

It belongs to the RecA family.

It is found in the cytoplasm. Functionally, can catalyze the hydrolysis of ATP in the presence of single-stranded DNA, the ATP-dependent uptake of single-stranded DNA by duplex DNA, and the ATP-dependent hybridization of homologous single-stranded DNAs. It interacts with LexA causing its activation and leading to its autocatalytic cleavage. This Phytoplasma mali (strain AT) protein is Protein RecA.